The following is a 411-amino-acid chain: Secretion apparatus protein BsaZ (411 aa).

The next 4 helical transmembrane spans lie at 28–48 (IVAL…VDLT), 80–100 (IAAP…LVQS), 137–157 (ALLY…LYHA), and 175–195 (IVLT…VLIL). The interval 341–411 (AANRGGPPPE…APARTGDQNA (71 aa)) is disordered. Positions 370 to 404 (DACADNAFPDDAPPGAAAPNAGSPDSPAPDGGAPA) are enriched in low complexity.

The protein belongs to the type III secretion exporter family.

Its subcellular location is the cell membrane. In terms of biological role, part of the bsa type III secretion system, is involved in the intracellular replication of invading bacteria inside the host cell. Probably necessary for the lysis of the vacuole membrane and escape into the host cell cytoplasm. The sequence is that of Secretion apparatus protein BsaZ (bsaZ) from Burkholderia mallei (strain NCTC 10247).